Consider the following 423-residue polypeptide: NADP-specific glutamate dehydrogenase (423 aa).

Lysine 112 is a catalytic residue.

Belongs to the Glu/Leu/Phe/Val dehydrogenases family. As to quaternary structure, homohexamer.

The enzyme catalyses L-glutamate + NADP(+) + H2O = 2-oxoglutarate + NH4(+) + NADPH + H(+). This chain is NADP-specific glutamate dehydrogenase (gdhA), found in Saccharolobus shibatae (strain ATCC 51178 / DSM 5389 / JCM 8931 / NBRC 15437 / B12) (Sulfolobus shibatae).